A 233-amino-acid polypeptide reads, in one-letter code: Peroxisomal membrane protein 11-5 (233 aa).

The Cytoplasmic portion of the chain corresponds to 1–92 (MSSLESARAD…PLILLGKSKN (92 aa)). The chain crosses the membrane as a helical span at residues 93–113 (ALLSTFLFLDQIVWAGRTGIY). Topologically, residues 114–206 (KNKERAEFLS…LLQLAPKKVT (93 aa)) are lumenal. A helical transmembrane segment spans residues 207–226 (PRVTGAFGFASSLIACYQLL).

The protein belongs to the peroxin-11 family. Expressed in seedlings, roots, shoots, leaf sheaths, flag leaf, panicles, spikelets, and endosperm.

It is found in the peroxisome membrane. Functionally, involved in peroxisomal proliferation. The polypeptide is Peroxisomal membrane protein 11-5 (PEX11-5) (Oryza sativa subsp. japonica (Rice)).